A 1256-amino-acid polypeptide reads, in one-letter code: GPI inositol-deacylase (1256 aa).

Positions 37 to 48 (DVYANSTTNATA) are enriched in polar residues. Residues 37-203 (DVYANSTTNA…MEKEEEQKFV (167 aa)) form a disordered region. N-linked (GlcNAc...) asparagine glycosylation is found at Asn-41 and Asn-45. Over residues 59 to 68 (PRPSRPSQSS) the composition is skewed to low complexity. The span at 69–83 (AAERTSPESPSVRQS) shows a compositional bias: polar residues. Residues 107-135 (QSPSQQSQNQQQQQQQQQQQQQQQQQQQS) are compositionally biased toward low complexity. Polar residues predominate over residues 143–156 (SGNFNWKLSHSRNG). Asn-155 is a glycosylation site (N-linked (GlcNAc...) asparagine). The segment covering 165–180 (FFSSSFSHSPSTPPLS) has biased composition (low complexity). Positions 190–202 (HSKEMEKEEEQKF) are enriched in basic and acidic residues. The chain crosses the membrane as a helical span at residues 214-234 (AITFVTLLISILGIGFLALVL). Asn-235 carries an N-linked (GlcNAc...) asparagine glycan. Ser-397 is a catalytic residue. N-linked (GlcNAc...) asparagine glycosylation is present at Asn-582. Helical transmembrane passes span 882-902 (LYMR…TLVL) and 929-949 (SIPL…NSSS). Residue Asn-960 is glycosylated (N-linked (GlcNAc...) asparagine). Transmembrane regions (helical) follow at residues 980–1000 (PFFW…CTVF), 1005–1025 (LTLV…PGWI), 1053–1073 (ILLV…VCCL), 1103–1123 (SILL…VVWI), 1130–1150 (WLTP…IILV), and 1172–1192 (VLLF…AYML). Asn-1212, Asn-1239, and Asn-1242 each carry an N-linked (GlcNAc...) asparagine glycan.

It belongs to the GPI inositol-deacylase family.

Its subcellular location is the endoplasmic reticulum membrane. Its function is as follows. Involved in inositol deacylation of GPI-anchored proteins which plays important roles in the quality control and ER-associated degradation of GPI-anchored proteins. In Neurospora crassa (strain ATCC 24698 / 74-OR23-1A / CBS 708.71 / DSM 1257 / FGSC 987), this protein is GPI inositol-deacylase (bst-1).